An 88-amino-acid polypeptide reads, in one-letter code: Small ribosomal subunit protein bS20 (88 aa).

The disordered stretch occupies residues 1 to 27 (MANSKSAKKRALQSEKRRQHNASRRSM).

This sequence belongs to the bacterial ribosomal protein bS20 family.

In terms of biological role, binds directly to 16S ribosomal RNA. In Shewanella woodyi (strain ATCC 51908 / MS32), this protein is Small ribosomal subunit protein bS20.